A 160-amino-acid polypeptide reads, in one-letter code: Large ribosomal subunit protein uL10 (160 aa).

It belongs to the universal ribosomal protein uL10 family. As to quaternary structure, part of the ribosomal stalk of the 50S ribosomal subunit. The N-terminus interacts with L11 and the large rRNA to form the base of the stalk. The C-terminus forms an elongated spine to which L12 dimers bind in a sequential fashion forming a multimeric L10(L12)X complex.

Forms part of the ribosomal stalk, playing a central role in the interaction of the ribosome with GTP-bound translation factors. In Ehrlichia canis (strain Jake), this protein is Large ribosomal subunit protein uL10.